The following is a 362-amino-acid chain: Talin rod domain-containing protein 1 (362 aa).

Residues 1 to 27 (MASGSAGKPTGEAASPAPGSAVGGASS) form a disordered region. A2 is modified (N-acetylalanine). A compositionally biased stretch (low complexity) spans 9-27 (PTGEAASPAPGSAVGGASS).

In terms of assembly, may homodimerize. Interacts with F-actin. As to expression, ubiquitous.

Actin-binding protein which may have an oncogenic function and regulates cell proliferation, migration and invasion in cancer cells. The sequence is that of Talin rod domain-containing protein 1 from Mus musculus (Mouse).